Here is a 279-residue protein sequence, read N- to C-terminus: Putative hydroxypyruvate isomerase (279 aa).

Residues glutamate 155 and glutamate 256 each act as proton donor/acceptor in the active site. A disordered region spans residues 260-279 (GDDPSAQSFSWLPAGARAAR).

The protein belongs to the hyi family.

It catalyses the reaction 3-hydroxypyruvate = 2-hydroxy-3-oxopropanoate. Functionally, catalyzes the reversible isomerization between hydroxypyruvate and 2-hydroxy-3-oxopropanoate (also termed tartronate semialdehyde). The sequence is that of Putative hydroxypyruvate isomerase from Streptomyces coelicolor (strain ATCC BAA-471 / A3(2) / M145).